Consider the following 72-residue polypeptide: Large ribosomal subunit protein bL31 (72 aa).

It belongs to the bacterial ribosomal protein bL31 family. Type A subfamily. In terms of assembly, part of the 50S ribosomal subunit.

In terms of biological role, binds the 23S rRNA. This chain is Large ribosomal subunit protein bL31, found in Prosthecochloris aestuarii (strain DSM 271 / SK 413).